Reading from the N-terminus, the 267-residue chain is Protein COFACTOR ASSEMBLY OF COMPLEX C SUBUNIT B CCB1, chloroplastic (267 aa).

Residues 1–44 constitute a chloroplast transit peptide; that stretch reads MATKLISPPLSCPWVTSREVIIKGLPRRRREWMVTKRNRVSAVT. The Lumenal portion of the chain corresponds to 45–84; the sequence is AMIVEPLSVVSSSAIQIHQWWEQNPNSLLLMTEATGGYSL. A helical membrane pass occupies residues 85-105; sequence ASYYTSLGLFVISVPGLWSLI. Topologically, residues 106-164 are stromal; sequence KRSVKSKIVRKTFVVNDVKKEPKQVAGEILSFFTRKNFNITDRGETITFEGKMVPSRGQ. Residues 165 to 185 traverse the membrane as a helical segment; sequence AALLTFCTCISLASVGLVLTI. Position 186 (Thr186) is a topological domain, lumenal. A helical transmembrane segment spans residues 187-207; sequence VPDFGNNWFFIILLSPLAGVY. The Stromal segment spans residues 208 to 267; it reads YWKKASRKEEIKVKMMVGSKGRLDEIVVQGDDVQVEEMRKELQLNEKGMVYVKGLFERSS.

The protein localises to the plastid. Its subcellular location is the chloroplast thylakoid membrane. Functionally, required for the biogenesis and accumulation of native cytochrome b6 in the thylakoid membrane. Controls the conversion of apocytochrome b6 to holocytochrome b6. Required for covalent binding of the c-type heme to cytochrome b6. The sequence is that of Protein COFACTOR ASSEMBLY OF COMPLEX C SUBUNIT B CCB1, chloroplastic from Arabidopsis thaliana (Mouse-ear cress).